Reading from the N-terminus, the 341-residue chain is DNA fragmentation factor subunit beta (341 aa).

A CIDE-N domain is found at 7-83; it reads KPKTFKLRSL…LLTAGQTWQG (77 aa).

As to quaternary structure, heterodimer of DFFA and DFFB. Interacts with H1-1.

The protein resides in the cytoplasm. Its subcellular location is the nucleus. Inhibited by DFFA (DFF45). Interacts with HIST1H1A. Functionally, nuclease that induces DNA fragmentation and chromatin condensation during apoptosis. Degrades naked DNA and induces apoptotic morphology. In Bos taurus (Bovine), this protein is DNA fragmentation factor subunit beta (DFFB).